The following is a 513-amino-acid chain: Beta-amyrin 24-hydroxylase (513 aa).

The chain crosses the membrane as a helical; Signal-anchor span at residues 1 to 21 (MLDIKGYLVLFFLWFISTILI). Residue cysteine 451 participates in heme binding.

It belongs to the cytochrome P450 family. It depends on heme as a cofactor.

It localises to the membrane. It catalyses the reaction beta-amyrin + reduced [NADPH--hemoprotein reductase] + O2 = 24-hydroxy-beta-amyrin + oxidized [NADPH--hemoprotein reductase] + H2O + H(+). The enzyme catalyses sophoradiol + reduced [NADPH--hemoprotein reductase] + O2 = soyasapogenol B + oxidized [NADPH--hemoprotein reductase] + H2O + H(+). Its function is as follows. Heme-containing cytochrome P450 involved in the biosynthesis of soyasaponins. Hydroxylates specifically the C-24 methyl group of the triterpenes beta-amyrin and sophoradiol. No activity with lupeol, butyrospermol, tirucalla-7,21-dien-3beta-ol, taraxasterol, psi-taraxasterol, bauerenol, alpha-amyrin and multiflorenol as substrates. The protein is Beta-amyrin 24-hydroxylase (CYP93E1) of Glycine max (Soybean).